The sequence spans 236 residues: Orotidine 5'-phosphate decarboxylase (236 aa).

Substrate is bound by residues aspartate 14, lysine 36, 63–72 (DLKFHDIPNT), threonine 123, arginine 184, glutamine 193, glycine 213, and arginine 214. Lysine 65 (proton donor) is an active-site residue.

This sequence belongs to the OMP decarboxylase family. Type 1 subfamily. As to quaternary structure, homodimer.

It catalyses the reaction orotidine 5'-phosphate + H(+) = UMP + CO2. Its pathway is pyrimidine metabolism; UMP biosynthesis via de novo pathway; UMP from orotate: step 2/2. Its function is as follows. Catalyzes the decarboxylation of orotidine 5'-monophosphate (OMP) to uridine 5'-monophosphate (UMP). In Marinobacter nauticus (strain ATCC 700491 / DSM 11845 / VT8) (Marinobacter aquaeolei), this protein is Orotidine 5'-phosphate decarboxylase.